The chain runs to 74 residues: MLVLTRKQSEAIQIGEDIEIEVIAIEGEQVKLGIRAPKSVDIYRKEIYVDITNQNNEAAIIDKNLLQFLKNNNS.

It belongs to the CsrA/RsmA family. As to quaternary structure, homodimer; the beta-strands of each monomer intercalate to form a hydrophobic core, while the alpha-helices form wings that extend away from the core.

Its subcellular location is the cytoplasm. In terms of biological role, a translational regulator that binds mRNA to regulate translation initiation and/or mRNA stability. Usually binds in the 5'-UTR at or near the Shine-Dalgarno sequence preventing ribosome-binding, thus repressing translation. Its main target seems to be the major flagellin gene, while its function is anatagonized by FliW. The sequence is that of Translational regulator CsrA from Oceanobacillus iheyensis (strain DSM 14371 / CIP 107618 / JCM 11309 / KCTC 3954 / HTE831).